Reading from the N-terminus, the 364-residue chain is Spermidine/putrescine import ATP-binding protein PotA (364 aa).

Positions 5–235 (LSFKDVSKGF…PVNRFVADFI (231 aa)) constitute an ABC transporter domain. 37-44 (GPSGCGKT) lines the ATP pocket.

The protein belongs to the ABC transporter superfamily. Spermidine/putrescine importer (TC 3.A.1.11.1) family. As to quaternary structure, the complex is composed of two ATP-binding proteins (PotA), two transmembrane proteins (PotB and PotC) and a solute-binding protein (PotD).

The protein resides in the cell membrane. The enzyme catalyses ATP + H2O + polyamine-[polyamine-binding protein]Side 1 = ADP + phosphate + polyamineSide 2 + [polyamine-binding protein]Side 1.. Part of the ABC transporter complex PotABCD involved in spermidine/putrescine import. Responsible for energy coupling to the transport system. This chain is Spermidine/putrescine import ATP-binding protein PotA, found in Staphylococcus epidermidis (strain ATCC 12228 / FDA PCI 1200).